A 380-amino-acid polypeptide reads, in one-letter code: Asporin (380 aa).

An N-terminal signal peptide occupies residues M1 to S14. Residues A15–K32 constitute a propeptide that is removed on maturation. Residues E35 to N54 show a composition bias toward acidic residues. Residues E35–T59 are disordered. The O-linked (GalNAc...) serine glycan is linked to S55. Residues F66 to F102 form the LRRNT domain. 2 disulfide bridges follow: C75-C81 and C79-C88. LRR repeat units lie at residues D103–G124, S127–T148, K151–L173, A174–G193, A196–G219, T242–R263, E266–N287, R290–K312, Y313–P334, T335–W357, and E358–M380. Residues P166 to I212 form an interaction with TGFB1 region. The N-linked (GlcNAc...) asparagine glycan is linked to N282. The cysteines at positions 333 and 366 are disulfide-linked.

This sequence belongs to the small leucine-rich proteoglycan (SLRP) family. SLRP class I subfamily. Interacts with TGFB1, TGFB2 and TGFB3. DCN, BGN, and FMOD inhibit binding to TGFB1. Interacts with BMP2. Interacts in vitro with type II collagen. Interacts with type I collagen. DCN can inhibit collagen binding. There is no serine/glycine dipeptide sequence expected for the attachment of O-linked glycosaminoglycans and this is probably not a proteoglycan. The O-linked polysaccharide on 54-Ser is probably the mucin type linked to GalNAc. In terms of processing, the N-linked glycan at Asn-282 is composed of variable structures of GlcNAc, mannose, fucose, HexNAc and hexose. As to expression, higher levels in osteoarthritic articular cartilage, aorta, uterus. Moderate expression in small intestine, heart, liver, bladder, ovary, stomach, and in the adrenal, thyroid, and mammary glands. Low expression in trachea, bone marrow, and lung. Colocalizes with TGFB1 in chondrocytes within osteoarthritic (OA) lesions of articular cartilage.

The protein resides in the secreted. It localises to the extracellular space. Its subcellular location is the extracellular matrix. Its function is as follows. Negatively regulates periodontal ligament (PDL) differentiation and mineralization to ensure that the PDL is not ossified and to maintain homeostasis of the tooth-supporting system. Inhibits BMP2-induced cytodifferentiation of PDL cells by preventing its binding to BMPR1B/BMP type-1B receptor, resulting in inhibition of BMP-dependent activation of SMAD proteins. Critical regulator of TGF-beta in articular cartilage and plays an essential role in cartilage homeostasis and osteoarthritis (OA) pathogenesis. Negatively regulates chondrogenesis in the articular cartilage by blocking the TGF-beta/receptor interaction on the cell surface and inhibiting the canonical TGF-beta/Smad signal. Binds calcium and plays a role in osteoblast-driven collagen biomineralization activity. The polypeptide is Asporin (ASPN) (Homo sapiens (Human)).